Reading from the N-terminus, the 372-residue chain is DNA polymerase delta subunit 3 (372 aa).

2 disordered regions span residues 156–264 (KKAP…NLDS) and 352–372 (KKNT…FGKK). The segment covering 160–173 (STHSPQLSVPSKTS) has biased composition (polar residues). Residue S163 is modified to Phosphoserine. 2 stretches are compositionally biased toward basic and acidic residues: residues 174 to 190 (TIDK…KGKD) and 209 to 239 (APLE…DDLK). The span at 355-365 (TAQSKPQQKSI) shows a compositional bias: polar residues.

As to quaternary structure, heterotetramer that consist of the pol3, cdc1, cdc27 and cdm1 subunits. Cdc27 interacts with cdc1 and is required for dimerization of the tetramer.

The protein resides in the nucleus. The polypeptide is DNA polymerase delta subunit 3 (cdc27) (Schizosaccharomyces pombe (strain 972 / ATCC 24843) (Fission yeast)).